A 772-amino-acid polypeptide reads, in one-letter code: Carnitine O-palmitoyltransferase 1, muscle isoform (772 aa).

Residues Met-1–Lys-47 lie on the Cytoplasmic side of the membrane. A helical membrane pass occupies residues Asn-48–Ser-73. The Mitochondrial intermembrane portion of the chain corresponds to Tyr-74–Gln-102. A helical membrane pass occupies residues Thr-103–Phe-122. Residues Phe-123–Ser-772 lie on the Cytoplasmic side of the membrane. Catalysis depends on His-473, which acts as the Proton acceptor. A CoA-binding site is contributed by Gly-555 to Asp-567. The (R)-carnitine site is built by Tyr-589 and Thr-602.

This sequence belongs to the carnitine/choline acetyltransferase family.

It is found in the mitochondrion outer membrane. It carries out the reaction (R)-carnitine + hexadecanoyl-CoA = O-hexadecanoyl-(R)-carnitine + CoA. It participates in lipid metabolism; fatty acid beta-oxidation. Its function is as follows. Catalyzes the transfer of the acyl group of long-chain fatty acid-CoA conjugates onto carnitine, an essential step for the mitochondrial uptake of long-chain fatty acids and their subsequent beta-oxidation in the mitochondrion. The polypeptide is Carnitine O-palmitoyltransferase 1, muscle isoform (CPT1B) (Sus scrofa (Pig)).